Here is a 216-residue protein sequence, read N- to C-terminus: Large ribosomal subunit protein uL1y (216 aa).

It belongs to the universal ribosomal protein uL1 family. As to quaternary structure, interacts with the GTPase NUG2.

This Arabidopsis thaliana (Mouse-ear cress) protein is Large ribosomal subunit protein uL1y (RPL10AB).